The following is a 50-amino-acid chain: Metallothionein zym1 (50 aa).

Residues Cys-7, Cys-15, Cys-17, Cys-21, Cys-23, Cys-26, Cys-30, Cys-32, Cys-40, Cys-42, Cys-45, and Cys-47 each coordinate Zn(2+).

This sequence belongs to the metallothionein superfamily.

The protein resides in the cytoplasm. The protein localises to the nucleus. Metallothionein involved in tolerance to zinc and cadmium. Binds four zinc ions. This chain is Metallothionein zym1 (zym1), found in Schizosaccharomyces pombe (strain 972 / ATCC 24843) (Fission yeast).